We begin with the raw amino-acid sequence, 293 residues long: Caspase-6 (293 aa).

Positions 1 to 20 (MSSEPPPRRARGPGEEQNMT) are disordered. Positions 1–23 (MSSEPPPRRARGPGEEQNMTEID) are excised as a propeptide. Positions 42–44 (KRR) are tri-arginine exosite. Ser79 carries the post-translational modification Phosphoserine. His121 is an active-site residue. The 130's region stretch occupies residues 125–142 (NHIYAYDAKIEIQTLTGL). Cys163 is a catalytic residue. Positions 180 to 193 (HRTDTPDANLTQVD) are excised as a propeptide. Phosphoserine is present on Ser257. Residues Cys264 and Cys277 are each lipidated (S-palmitoyl cysteine).

Belongs to the peptidase C14A family. Heterotetramer that consists of two anti-parallel arranged heterodimers, each one formed by a 18 kDa (p18) and a 11 kDa (p11) subunits. Interacts with BIRC6/bruce. Interacts with RIPK3. As to quaternary structure, heterotetramer that consists of two anti-parallel arranged heterodimers, each one formed by a 18 kDa (Caspase-6 subunit p18) and a 11 kDa (Caspase-6 subunit p11) subunit. Post-translationally, phosphorylated by NUAK1; phosphorylation inhibits self-activation. Phosphorylation at Ser-257 by AMP-activated protein kinase (PRKAA1 or PRKAA2) inhibits autocleavage, preventing caspase activation, thereby preventing hepatocyte apoptosis. Palmitoylation by ZDHHC17 blocks dimerization and subsequent activation, leading to inhibit the cysteine protease activity. In terms of processing, can be cleaved and activated by different caspases, depending on the context. Cleaved and activated by caspase-8 (CASP8) and subsequently by caspase-3 (CASP3). Can also undergo autoactivation by mediating autocleavage at Asp-179 and Asp-193, while it is not able to cleave its N-terminal disordered prodomain. Cleaved and activated by CASP1, possibly in the context of inflammation.

The protein localises to the cytoplasm. Its subcellular location is the nucleus. It carries out the reaction Strict requirement for Asp at position P1 and has a preferred cleavage sequence of Val-Glu-His-Asp-|-.. Its activity is regulated as follows. During activation, the N-terminal disordered prodomain is removed by cleavage. Concomitantly, double cleavage gives rise to a large 18-kDa and a small 11-kDa subunit. The two large and two small subunits then assemble to form the active CASP6 complex. Can be cleaved and activated by different caspases, depending on the context. Cleaved and activated by caspase-8 (CASP8) and subsequently by caspase-3 (CASP3). Can also undergo autoactivation by mediating autocleavage at Asp-179 and Asp-193, while it is not able to cleave its N-terminal disordered prodomain. Intramolecular cleavage at Asp-193 is a prerequisite for CASP6 self-activation. Cleaved and activated by CASP1 in neurons, possibly in the context of inflammation. Phosphorylation at Ser-257 inhibits autocleavage, preventing caspase activation. Functionally, cysteine protease that plays essential roles in programmed cell death, axonal degeneration, development and innate immunity. Acts as a non-canonical executioner caspase during apoptosis: localizes in the nucleus and cleaves the nuclear structural protein NUMA1 and lamin A/LMNA thereby inducing nuclear shrinkage and fragmentation. Lamin-A/LMNA cleavage is required for chromatin condensation and nuclear disassembly during apoptotic execution. Acts as a regulator of liver damage by promoting hepatocyte apoptosis: in absence of phosphorylation by AMP-activated protein kinase (AMPK), catalyzes cleavage of BID, leading to cytochrome c release, thereby participating in nonalcoholic steatohepatitis. Cleaves PARK7/DJ-1 in cells undergoing apoptosis. Involved in intrinsic apoptosis by mediating cleavage of RIPK1. Furthermore, cleaves many transcription factors such as NF-kappa-B and cAMP response element-binding protein/CREBBP. Cleaves phospholipid scramblase proteins XKR4 and XKR9. In addition to apoptosis, involved in different forms of programmed cell death. Plays an essential role in defense against viruses by acting as a central mediator of the ZBP1-mediated pyroptosis, apoptosis, and necroptosis (PANoptosis), independently of its cysteine protease activity. PANoptosis is a unique inflammatory programmed cell death, which provides a molecular scaffold that allows the interactions and activation of machinery required for inflammasome/pyroptosis, apoptosis and necroptosis. Mechanistically, interacts with RIPK3 and enhances the interaction between RIPK3 and ZBP1, leading to ZBP1-mediated inflammasome activation and cell death. Plays an essential role in axon degeneration during axon pruning which is the remodeling of axons during neurogenesis but not apoptosis. Regulates B-cell programs both during early development and after antigen stimulation. This Bos taurus (Bovine) protein is Caspase-6.